The sequence spans 73 residues: Conotoxin ArMKLT2-022 (73 aa).

The signal sequence occupies residues 1-22; the sequence is MKLTCVLIIAVLFLTACQLTTG. The propeptide occupies 23 to 40; that stretch reads EQKDHAQRSADRNSKLTR. Glutamine 41 carries the pyrrolidone carboxylic acid modification. Disulfide bonds link cysteine 42/cysteine 56, cysteine 49/cysteine 60, and cysteine 55/cysteine 67.

Belongs to the conotoxin O1 superfamily. As to expression, expressed by the venom duct.

It localises to the secreted. This chain is Conotoxin ArMKLT2-022, found in Conus arenatus (Sand-dusted cone).